A 209-amino-acid chain; its full sequence is Large ribosomal subunit protein bL25 (209 aa).

The segment at 183-209 is disordered; the sequence is TAGERPAAEPAAAPGAAPAAGPEEAEE. Over residues 184–209 the composition is skewed to low complexity; it reads AGERPAAEPAAAPGAAPAAGPEEAEE.

This sequence belongs to the bacterial ribosomal protein bL25 family. CTC subfamily. Part of the 50S ribosomal subunit; part of the 5S rRNA/L5/L18/L25 subcomplex. Contacts the 5S rRNA. Binds to the 5S rRNA independently of L5 and L18.

In terms of biological role, this is one of the proteins that binds to the 5S RNA in the ribosome where it forms part of the central protuberance. This is Large ribosomal subunit protein bL25 from Pelotomaculum thermopropionicum (strain DSM 13744 / JCM 10971 / SI).